The primary structure comprises 412 residues: Serine hydroxymethyltransferase (412 aa).

Residues L117 and 121–123 contribute to the (6S)-5,6,7,8-tetrahydrofolate site; that span reads GHL. K226 carries the N6-(pyridoxal phosphate)lysine modification. Residue 349-351 participates in (6S)-5,6,7,8-tetrahydrofolate binding; sequence SPF.

This sequence belongs to the SHMT family. Homodimer. The cofactor is pyridoxal 5'-phosphate.

The protein resides in the cytoplasm. The enzyme catalyses (6R)-5,10-methylene-5,6,7,8-tetrahydrofolate + glycine + H2O = (6S)-5,6,7,8-tetrahydrofolate + L-serine. It functions in the pathway one-carbon metabolism; tetrahydrofolate interconversion. Its pathway is amino-acid biosynthesis; glycine biosynthesis; glycine from L-serine: step 1/1. Functionally, catalyzes the reversible interconversion of serine and glycine with tetrahydrofolate (THF) serving as the one-carbon carrier. This reaction serves as the major source of one-carbon groups required for the biosynthesis of purines, thymidylate, methionine, and other important biomolecules. Also exhibits THF-independent aldolase activity toward beta-hydroxyamino acids, producing glycine and aldehydes, via a retro-aldol mechanism. The sequence is that of Serine hydroxymethyltransferase from Geobacillus thermodenitrificans (strain NG80-2).